Consider the following 135-residue polypeptide: MAAAIDGSLPVCRQSAALIDGVHTDFLASWYSDRILVLVTQFQKFGTLVSVTRDQPVARPDQAQGGTDSHTFTTKVLMGDDLPIWHVYGQQIFKAINGEDGCKPVLVAIALQNHSPEILKCILGQLESIRQVQTP.

Belongs to the PSMG3 family.

Functionally, chaperone protein which promotes assembly of the 20S proteasome. May cooperate with psmg1-psmg2 heterodimers to orchestrate the correct assembly of proteasomes. This Nematostella vectensis (Starlet sea anemone) protein is Proteasome assembly chaperone 3 (psmg3).